We begin with the raw amino-acid sequence, 349 residues long: Ribosomal RNA large subunit methyltransferase M (349 aa).

S-adenosyl-L-methionine-binding positions include 216–219, Asp235, Asp255, and Asp271; that span reads APGG. The Proton acceptor role is filled by Lys300.

Belongs to the class I-like SAM-binding methyltransferase superfamily. RNA methyltransferase RlmE family. RlmM subfamily. As to quaternary structure, monomer.

It is found in the cytoplasm. It carries out the reaction cytidine(2498) in 23S rRNA + S-adenosyl-L-methionine = 2'-O-methylcytidine(2498) in 23S rRNA + S-adenosyl-L-homocysteine + H(+). In terms of biological role, catalyzes the 2'-O-methylation at nucleotide C2498 in 23S rRNA. This chain is Ribosomal RNA large subunit methyltransferase M, found in Saccharophagus degradans (strain 2-40 / ATCC 43961 / DSM 17024).